A 184-amino-acid chain; its full sequence is Ribosome-recycling factor (184 aa).

Belongs to the RRF family.

The protein localises to the cytoplasm. Functionally, responsible for the release of ribosomes from messenger RNA at the termination of protein biosynthesis. May increase the efficiency of translation by recycling ribosomes from one round of translation to another. The polypeptide is Ribosome-recycling factor (Bifidobacterium adolescentis (strain ATCC 15703 / DSM 20083 / NCTC 11814 / E194a)).